The following is a 216-amino-acid chain: Octanoyltransferase (216 aa).

Residues 35 to 213 (NSNPDFIWIG…IIQEEFNFDF (179 aa)) enclose the BPL/LPL catalytic domain. Residues 77–84 (RGGEVTCH), 144–146 (SIG), and 157–159 (GFS) contribute to the substrate site. The active-site Acyl-thioester intermediate is Cys175.

The protein belongs to the LipB family.

The protein resides in the cytoplasm. It catalyses the reaction octanoyl-[ACP] + L-lysyl-[protein] = N(6)-octanoyl-L-lysyl-[protein] + holo-[ACP] + H(+). It functions in the pathway protein modification; protein lipoylation via endogenous pathway; protein N(6)-(lipoyl)lysine from octanoyl-[acyl-carrier-protein]: step 1/2. Its function is as follows. Catalyzes the transfer of endogenously produced octanoic acid from octanoyl-acyl-carrier-protein onto the lipoyl domains of lipoate-dependent enzymes. Lipoyl-ACP can also act as a substrate although octanoyl-ACP is likely to be the physiological substrate. The chain is Octanoyltransferase from Prochlorococcus marinus (strain MIT 9312).